The chain runs to 361 residues: Probable dual-specificity RNA methyltransferase RlmN (361 aa).

The active-site Proton acceptor is Glu91. The region spanning Gln97–Arg329 is the Radical SAM core domain. Cys104 and Cys340 form a disulfide bridge. Residues Cys111, Cys115, and Cys118 each contribute to the [4Fe-4S] cluster site. S-adenosyl-L-methionine-binding positions include Gly163–Glu164, Ser195, Ser218–His220, and Asn296. Cys340 functions as the S-methylcysteine intermediate in the catalytic mechanism.

It belongs to the radical SAM superfamily. RlmN family. Requires [4Fe-4S] cluster as cofactor.

It is found in the cytoplasm. It catalyses the reaction adenosine(2503) in 23S rRNA + 2 reduced [2Fe-2S]-[ferredoxin] + 2 S-adenosyl-L-methionine = 2-methyladenosine(2503) in 23S rRNA + 5'-deoxyadenosine + L-methionine + 2 oxidized [2Fe-2S]-[ferredoxin] + S-adenosyl-L-homocysteine. The catalysed reaction is adenosine(37) in tRNA + 2 reduced [2Fe-2S]-[ferredoxin] + 2 S-adenosyl-L-methionine = 2-methyladenosine(37) in tRNA + 5'-deoxyadenosine + L-methionine + 2 oxidized [2Fe-2S]-[ferredoxin] + S-adenosyl-L-homocysteine. Its function is as follows. Specifically methylates position 2 of adenine 2503 in 23S rRNA and position 2 of adenine 37 in tRNAs. The polypeptide is Probable dual-specificity RNA methyltransferase RlmN (Streptococcus pneumoniae (strain P1031)).